The chain runs to 113 residues: Large ribosomal subunit protein uL24 (113 aa).

The tract at residues 48–70 (HRKRVTNDKGTSSGGLEKRESPM) is disordered.

The protein belongs to the universal ribosomal protein uL24 family. Part of the 50S ribosomal subunit.

In terms of biological role, one of two assembly initiator proteins, it binds directly to the 5'-end of the 23S rRNA, where it nucleates assembly of the 50S subunit. Its function is as follows. One of the proteins that surrounds the polypeptide exit tunnel on the outside of the subunit. The polypeptide is Large ribosomal subunit protein uL24 (Tropheryma whipplei (strain TW08/27) (Whipple's bacillus)).